Consider the following 34-residue polypeptide: MSDINAARLPSFFFPIPCISDDIEMVLTRGESLC.

Positions Met-1 to Pro-10 are excised as a propeptide. Positions Ser-11 to Pro-17 form a cross-link, cyclopeptide (Ser-Pro). Positions Cys-18–Cys-34 are excised as a propeptide.

Belongs to the MSDIN fungal toxin family. Post-translationally, processed by the macrocyclase-peptidase enzyme POPB to yield a cyclic decapeptide. POPB first removes 10 residues from the N-terminus. Conformational trapping of the remaining peptide forces the enzyme to release this intermediate rather than proceed to macrocyclization. The enzyme rebinds the remaining peptide in a different conformation and catalyzes macrocyclization of the N-terminal 7 residues.

Functionally, cyclic heptapeptide that belongs to the MSDIN-like toxin family responsible for a large number of food poisoning cases and deaths. Cycloaminide B is non-toxic to mammals but shows immunosuppressive activity, probably through the inhibition of the action of interleukin-1 and interleukin-2. This is Cycloamanide B proprotein from Amanita phalloides (Death cap).